A 342-amino-acid chain; its full sequence is Farnesyl pyrophosphate synthase 2 (342 aa).

Residues K48, R51, and Q86 each coordinate isopentenyl diphosphate. Mg(2+)-binding residues include D93 and D97. R102 contributes to the dimethylallyl diphosphate binding site. R103 contacts isopentenyl diphosphate. K190, T191, Q229, K246, and K255 together coordinate dimethylallyl diphosphate.

The protein belongs to the FPP/GGPP synthase family. The cofactor is Mg(2+).

It is found in the cytoplasm. It catalyses the reaction isopentenyl diphosphate + dimethylallyl diphosphate = (2E)-geranyl diphosphate + diphosphate. It carries out the reaction isopentenyl diphosphate + (2E)-geranyl diphosphate = (2E,6E)-farnesyl diphosphate + diphosphate. The protein operates within isoprenoid biosynthesis; farnesyl diphosphate biosynthesis; farnesyl diphosphate from geranyl diphosphate and isopentenyl diphosphate: step 1/1. It participates in isoprenoid biosynthesis; geranyl diphosphate biosynthesis; geranyl diphosphate from dimethylallyl diphosphate and isopentenyl diphosphate: step 1/1. In terms of biological role, catalyzes the sequential condensation of isopentenyl pyrophosphate with the allylic pyrophosphates, dimethylallyl pyrophosphate, and then with the resultant geranylpyrophosphate to the ultimate product farnesyl pyrophosphate. The chain is Farnesyl pyrophosphate synthase 2 (FPS2) from Parthenium argentatum (Guayule rubber plant).